The sequence spans 726 residues: Probable cyclic nucleotide-gated ion channel 14 (726 aa).

Residues 1–86 lie on the Cytoplasmic side of the membrane; sequence MEFKRDNTVR…GDAVLQWNRV (86 aa). A helical membrane pass occupies residues 87-107; it reads FLFWCLVALYVDPLFFFLSSV. Topologically, residues 108–122 are extracellular; the sequence is KRIGRSSCMTTDLKL. A helical membrane pass occupies residues 123–143; the sequence is GIVITFFRTLADLFYVLHIVI. At 144–177 the chain is on the cytoplasmic side; that stretch reads KFRTAYVSRTSRVFGRGELVKDPKLIARRYLRSD. A helical transmembrane segment spans residues 178-198; that stretch reads FIVDLIACLPLPQIVSWFILP. The Extracellular portion of the chain corresponds to 199-211; that stretch reads SIRSSHSDHTTNA. The helical transmembrane segment at 212–232 threads the bilayer; sequence LVLIVLVQYIPRLYLIFPLSA. Residues 233–252 are Cytoplasmic-facing; sequence EIIKATGVVTTTAWAGAAYN. Residues 253–273 form a helical membrane-spanning segment; that stretch reads LLQYMLASHILGSAWYLLSIE. Over 274–377 the chain is Extracellular; it reads RQATCWKAEC…LSTSTSVLET (104 aa). The helical transmembrane segment at 378-398 threads the bilayer; that stretch reads MFAILVAIFGLVLFALLIGNM. The Cytoplasmic segment spans residues 399–726; the sequence is QTYLQSITVR…PDEPDFSVDD (328 aa). A nucleoside 3',5'-cyclic phosphate contacts are provided by residues 481-605 and Glu552; that span reads LFAQ…SKKL. A calmodulin-binding region spans residues 597 to 612; sequence FRRLHSKKLQHTFRYY. The 30-residue stretch at 617–646 folds into the IQ domain; that stretch reads RTWAACFVQVAWRRYKRKKLAKSLSLAESF. The segment at 707-726 is disordered; the sequence is KDVEIPMLPKPDEPDFSVDD.

The protein belongs to the cyclic nucleotide-gated cation channel (TC 1.A.1.5) family. In terms of assembly, homotetramer or heterotetramer.

It localises to the cell membrane. In terms of biological role, probable cyclic nucleotide-gated ion channel. The protein is Probable cyclic nucleotide-gated ion channel 14 (CNGC14) of Arabidopsis thaliana (Mouse-ear cress).